The chain runs to 145 residues: Selenoprotein M (145 aa).

The N-terminal stretch at 1–23 (MSILLSPPSLLLLLAALVAPATS) is a signal peptide. Active-site nucleophile residues include cysteine 45 and selenocysteine 48. A cross-link (cysteinyl-selenocysteine (Cys-Sec)) is located at residues 45-48 (CGGU). Residue selenocysteine 48 is a non-standard amino acid, selenocysteine. The tract at residues 125–145 (PPEYLWAPAKPPEEASEHDDL) is disordered.

The protein belongs to the selenoprotein M/F family. As to expression, widely expressed. Highly expressed in brain.

It is found in the cytoplasm. Its subcellular location is the perinuclear region. It localises to the endoplasmic reticulum. The protein localises to the golgi apparatus. May function as a thiol-disulfide oxidoreductase that participates in disulfide bond formation. The sequence is that of Selenoprotein M from Mus musculus (Mouse).